Consider the following 458-residue polypeptide: Probable asparagine--tRNA ligase, cytoplasmic (458 aa).

It belongs to the class-II aminoacyl-tRNA synthetase family.

The protein localises to the cytoplasm. The catalysed reaction is tRNA(Asn) + L-asparagine + ATP = L-asparaginyl-tRNA(Asn) + AMP + diphosphate + H(+). The chain is Probable asparagine--tRNA ligase, cytoplasmic from Enterocytozoon bieneusi (strain H348) (Microsporidian parasite).